We begin with the raw amino-acid sequence, 198 residues long: Heme oxygenase PigA (198 aa).

His-26 provides a ligand contact to heme b.

The protein belongs to the heme oxygenase family.

It catalyses the reaction heme b + 3 AH2 + 3 O2 + 2 H(+) = biliverdin IXbeta + CO + Fe(2+) + 3 A + 3 H2O. The enzyme catalyses heme b + 3 AH2 + 3 O2 + 3 H(+) = biliverdin IXdelta + CO + Fe(2+) + 3 A + 3 H2O. Its function is as follows. Involved in heme degradation. Catalyzes the degradation of heme to biliverdin, with the release of iron. Forms biliverdin delta (70%) and beta (30%). Under anaerobic conditions ferredoxin--NADP(+) reductase (fpr) can provide the necessary electrons; Bfd is not required. The chain is Heme oxygenase PigA from Pseudomonas aeruginosa (strain ATCC 15692 / DSM 22644 / CIP 104116 / JCM 14847 / LMG 12228 / 1C / PRS 101 / PAO1).